Reading from the N-terminus, the 776-residue chain is Transcriptional regulator QRICH1 (776 aa).

The residue at position 1 (Met-1) is an N-acetylmethionine. Residues 6-48 form the CARD domain; the sequence is ENTISFEEYIRVKARSVPQHRMKEFLDSLASKGPEALQEFQQT. Disordered regions lie at residues 139–164 and 218–240; these read IQGQ…PSQL and ALSP…GTAS. Ser-345 is modified (phosphoserine). Residues Lys-353 and Lys-358 each participate in a glycyl lysine isopeptide (Lys-Gly) (interchain with G-Cter in SUMO2) cross-link. Residues 419 to 429 are compositionally biased toward low complexity; it reads QQQPQQQTPQE. Residues 419–441 form a disordered region; that stretch reads QQQPQQQTPQEQTPPPQQQQQQL. A Phosphoserine modification is found at Ser-464.

Its subcellular location is the nucleus. The protein localises to the cytoplasm. It is found in the cell membrane. Functionally, transcriptional regulator that acts as a mediator of the integrated stress response (ISR) through transcriptional control of protein homeostasis under conditions of ER stress. Controls the outcome of the unfolded protein response (UPR) which is an ER-stress response pathway. ER stress induces QRICH1 translation by a ribosome translation re-initiation mechanism in response to EIF2S1/eIF-2-alpha phosphorylation, and stress-induced QRICH1 regulates a transcriptional program associated with protein translation, protein secretion-mediated proteotoxicity and cell death during the terminal UPR. May cooperate with ATF4 transcription factor signaling to regulate ER homeostasis which is critical for cell viability. Up-regulates CASP3/caspase-3 activity in epithelial cells under ER stress. Central regulator of proteotoxicity associated with ER stress-mediated inflammatory diseases in the intestines and liver. Involved in chondrocyte hypertrophy, a process required for normal longitudinal bone growth. The protein is Transcriptional regulator QRICH1 of Homo sapiens (Human).